Consider the following 367-residue polypeptide: Peptide chain release factor 2 (367 aa).

Q250 is subject to N5-methylglutamine.

The protein belongs to the prokaryotic/mitochondrial release factor family. In terms of processing, methylated by PrmC. Methylation increases the termination efficiency of RF2.

It is found in the cytoplasm. In terms of biological role, peptide chain release factor 2 directs the termination of translation in response to the peptide chain termination codons UGA and UAA. The protein is Peptide chain release factor 2 of Mycobacteroides abscessus (strain ATCC 19977 / DSM 44196 / CCUG 20993 / CIP 104536 / JCM 13569 / NCTC 13031 / TMC 1543 / L948) (Mycobacterium abscessus).